A 268-amino-acid chain; its full sequence is MHPPAPDAPILFFDSGLGGLSVLGPTRALLPTAPIVYAADYAGLPYGRKSNEELAARVPALLGRLVERYQPRLAVIACNTASTIALGHVRAALDLPIVGTVPAIKPAAEMTKSGVIGVLGTEATVRQPYVDDLSARFAGGKTVLRHGSPGLVTGAEARLRGETVDPEVIARAVAGLRDQPRGDAIDVVVLACTHFPLLKDELQAGFGRGVALIDGAEGIARRIAHLTDGQAWPAIAVPGIAVFTRSDERPPPPLAVLAPYGIGSIETV.

Substrate is bound by residues 14 to 15 (DS) and 46 to 47 (YG). Catalysis depends on C78, which acts as the Proton donor/acceptor. 79–80 (NT) lines the substrate pocket. C192 (proton donor/acceptor) is an active-site residue. 193-194 (TH) is a binding site for substrate.

The protein belongs to the aspartate/glutamate racemases family.

The catalysed reaction is L-glutamate = D-glutamate. The protein operates within cell wall biogenesis; peptidoglycan biosynthesis. In terms of biological role, provides the (R)-glutamate required for cell wall biosynthesis. The sequence is that of Glutamate racemase from Sphingopyxis alaskensis (strain DSM 13593 / LMG 18877 / RB2256) (Sphingomonas alaskensis).